The primary structure comprises 361 residues: MGSISNNSGSEDCESREWLPSGESPAISSAMFSAGVLGNLIALALLARRWRGDAGRRAGRGNSISLFHVLVTELVFTDLLGTCLISPVVLASYARNQTLMALEPERRACTYFAFAMTFFSLATMLMLFAMALERYLSIGRPYFYQRHVTRRGGLAVLPTIYTVSLLFCSLPLLGYGQYVQYCPGTWCFIRHGRTAYLQLYATLLLLLIVAVLACNFSVILNLIRMHRRSGRSRCGPSLGSCRDGSGTRRRGERVSVAEETDHLILLAIMTITFAICSLPFTIFAYMNETSSRREKWDLQALRFLSINSIIDPWVFAIFRPPVLRLMRSVLCCRVSLRAQDATQTSCSIQSNASRLTFVDTS.

Polar residues predominate over residues 1-10 (MGSISNNSGS). The segment at 1 to 21 (MGSISNNSGSEDCESREWLPS) is disordered. At 1-23 (MGSISNNSGSEDCESREWLPSGE) the chain is on the extracellular side. The N-linked (GlcNAc...) asparagine glycan is linked to Asn6. Residues 24 to 47 (SPAISSAMFSAGVLGNLIALALLA) traverse the membrane as a helical segment. Topologically, residues 48 to 65 (RRWRGDAGRRAGRGNSIS) are cytoplasmic. A helical membrane pass occupies residues 66 to 91 (LFHVLVTELVFTDLLGTCLISPVVLA). Over 92-111 (SYARNQTLMALEPERRACTY) the chain is Extracellular. Asn96 is a glycosylation site (N-linked (GlcNAc...) asparagine). The cysteines at positions 109 and 187 are disulfide-linked. The helical transmembrane segment at 112–132 (FAFAMTFFSLATMLMLFAMAL) threads the bilayer. Topologically, residues 133–151 (ERYLSIGRPYFYQRHVTRR) are cytoplasmic. The chain crosses the membrane as a helical span at residues 152–176 (GGLAVLPTIYTVSLLFCSLPLLGYG). Residues 177–198 (QYVQYCPGTWCFIRHGRTAYLQ) are Extracellular-facing. A helical transmembrane segment spans residues 199–223 (LYATLLLLLIVAVLACNFSVILNLI). Topologically, residues 224-262 (RMHRRSGRSRCGPSLGSCRDGSGTRRRGERVSVAEETDH) are cytoplasmic. Residues 230 to 253 (GRSRCGPSLGSCRDGSGTRRRGER) are disordered. Residues 263-286 (LILLAIMTITFAICSLPFTIFAYM) form a helical membrane-spanning segment. Asn287 carries N-linked (GlcNAc...) asparagine glycosylation. At 287–299 (NETSSRREKWDLQ) the chain is on the extracellular side. A helical membrane pass occupies residues 300-323 (ALRFLSINSIIDPWVFAIFRPPVL). The Cytoplasmic portion of the chain corresponds to 324–361 (RLMRSVLCCRVSLRAQDATQTSCSIQSNASRLTFVDTS).

It belongs to the G-protein coupled receptor 1 family.

The protein localises to the cell membrane. Its function is as follows. Receptor for prostaglandin E2 (PGE2). The activity of this receptor is mediated by G(s) proteins that stimulate adenylate cyclase. The subsequent raise in intracellular cAMP is responsible for the relaxing effect of this receptor on smooth muscle. The polypeptide is Prostaglandin E2 receptor EP2 subtype (PTGER2) (Canis lupus familiaris (Dog)).